Reading from the N-terminus, the 313-residue chain is Intelectin-1b (313 aa).

Positions 1–19 (MTQLGFLLFIMIATRVCSA) are cleaved as a signal peptide. Positions 32-251 (SFFSSLPRSC…NNERAASALC (220 aa)) constitute a Fibrinogen C-terminal domain. Cysteine 41 and cysteine 70 are disulfide-bonded. Ca(2+) is bound by residues histidine 86, glutamate 87, asparagine 89, glycine 92, glycine 97, aspartate 98, and aspartate 133. Intrachain disulfides connect cysteine 94–cysteine 280, cysteine 199–cysteine 259, and cysteine 251–cysteine 265. Asparagine 163 carries an N-linked (GlcNAc...) asparagine glycan. 4 residues coordinate Ca(2+): asparagine 260, glutamate 262, glutamate 274, and aspartate 282. A carbohydrate is bound by residues 262-263 (EH) and glutamate 274. Serine 298 carries GPI-anchor amidated serine lipidation. A propeptide spanning residues 299 to 313 (NSREITEAAVLLFYR) is cleaved from the precursor.

Expressed in the globlet and Paneth cells of the small intestine of infected mice. Expressed in the ileum of uninfected mice.

The protein resides in the cell membrane. Its subcellular location is the secreted. May play a protective role in the innate immune response to parasite infection. This chain is Intelectin-1b (Itln1b), found in Mus musculus (Mouse).